We begin with the raw amino-acid sequence, 111 residues long: Large ribosomal subunit protein uL22 (111 aa).

This sequence belongs to the universal ribosomal protein uL22 family. As to quaternary structure, part of the 50S ribosomal subunit.

In terms of biological role, this protein binds specifically to 23S rRNA; its binding is stimulated by other ribosomal proteins, e.g. L4, L17, and L20. It is important during the early stages of 50S assembly. It makes multiple contacts with different domains of the 23S rRNA in the assembled 50S subunit and ribosome. Functionally, the globular domain of the protein is located near the polypeptide exit tunnel on the outside of the subunit, while an extended beta-hairpin is found that lines the wall of the exit tunnel in the center of the 70S ribosome. In Geotalea uraniireducens (strain Rf4) (Geobacter uraniireducens), this protein is Large ribosomal subunit protein uL22.